The chain runs to 251 residues: uncharacterized protein (251 aa).

3 N-linked (GlcNAc...) asparagine; by host glycosylation sites follow: asparagine 149, asparagine 152, and asparagine 207. The helical transmembrane segment at 226–246 threads the bilayer; that stretch reads YLIFIIIIIIFIILILLWIKY.

Belongs to the glycosyltransferase 32 family.

It localises to the membrane. This is an uncharacterized protein from Acanthamoeba polyphaga (Amoeba).